The following is a 492-amino-acid chain: Transmembrane protein 39B (492 aa).

The segment at 1–53 (MGGRRGPNRTSYYRNPLCEPGSSGASGGGHSSSASVSSVRSRSRTTSGTGLSS) is disordered. A glycan (N-linked (GlcNAc...) asparagine) is linked at asparagine 8. Residues 31-53 (SSSASVSSVRSRSRTTSGTGLSS) are compositionally biased toward low complexity. The next 8 membrane-spanning stretches (helical) occupy residues 77-97 (SILFELQLFFCQLIALFVHYI), 115-135 (TSLNFHLIDFNLLMVTTIVLG), 153-175 (SLFRSILLFLTRFTVLTATGWSL), 185-205 (TYSFLNLLFLCYPFGMYIPFL), 288-308 (EVLVSSMLSAYYVAFVPVWFV), 322-342 (LFLLVSISTSVILMQHLLPAS), 421-441 (ILNILLLLEGAVIVYQLYSLM), and 447-467 (HQTISLALILFSNYYAFFKLL).

The protein belongs to the TMEM39 family.

The protein resides in the endoplasmic reticulum membrane. Functionally, may protect the cells against DNA damage caused by exposure to the cold-warming stress and facilitates tissue damage repair during the recovery phase. In Rattus norvegicus (Rat), this protein is Transmembrane protein 39B.